We begin with the raw amino-acid sequence, 333 residues long: Holliday junction branch migration complex subunit RuvB (333 aa).

The segment at 1–181 is large ATPase domain (RuvB-L); it reads MNDILNKEPM…FGISSHMEYY (181 aa). Residues leucine 20, arginine 21, glycine 62, lysine 65, threonine 66, threonine 67, 128-130, arginine 171, tyrosine 181, and arginine 218 contribute to the ATP site; that span reads EDF. Residue threonine 66 participates in Mg(2+) binding. Residues 182 to 252 are small ATPAse domain (RuvB-S); the sequence is QERDLEEIVK…ITDKALSILD (71 aa). Residues 255 to 333 are head domain (RuvB-H); that stretch reads AAGLDYIDQK…HLGYVYNEED (79 aa). Positions 291, 310, and 315 each coordinate DNA.

It belongs to the RuvB family. As to quaternary structure, homohexamer. Forms an RuvA(8)-RuvB(12)-Holliday junction (HJ) complex. HJ DNA is sandwiched between 2 RuvA tetramers; dsDNA enters through RuvA and exits via RuvB. An RuvB hexamer assembles on each DNA strand where it exits the tetramer. Each RuvB hexamer is contacted by two RuvA subunits (via domain III) on 2 adjacent RuvB subunits; this complex drives branch migration. In the full resolvosome a probable DNA-RuvA(4)-RuvB(12)-RuvC(2) complex forms which resolves the HJ.

The protein resides in the cytoplasm. It carries out the reaction ATP + H2O = ADP + phosphate + H(+). In terms of biological role, the RuvA-RuvB-RuvC complex processes Holliday junction (HJ) DNA during genetic recombination and DNA repair, while the RuvA-RuvB complex plays an important role in the rescue of blocked DNA replication forks via replication fork reversal (RFR). RuvA specifically binds to HJ cruciform DNA, conferring on it an open structure. The RuvB hexamer acts as an ATP-dependent pump, pulling dsDNA into and through the RuvAB complex. RuvB forms 2 homohexamers on either side of HJ DNA bound by 1 or 2 RuvA tetramers; 4 subunits per hexamer contact DNA at a time. Coordinated motions by a converter formed by DNA-disengaged RuvB subunits stimulates ATP hydrolysis and nucleotide exchange. Immobilization of the converter enables RuvB to convert the ATP-contained energy into a lever motion, pulling 2 nucleotides of DNA out of the RuvA tetramer per ATP hydrolyzed, thus driving DNA branch migration. The RuvB motors rotate together with the DNA substrate, which together with the progressing nucleotide cycle form the mechanistic basis for DNA recombination by continuous HJ branch migration. Branch migration allows RuvC to scan DNA until it finds its consensus sequence, where it cleaves and resolves cruciform DNA. The polypeptide is Holliday junction branch migration complex subunit RuvB (Lactococcus lactis subsp. lactis (strain IL1403) (Streptococcus lactis)).